The following is a 610-amino-acid chain: ATP-dependent zinc metalloprotease FtsH (610 aa).

The Cytoplasmic portion of the chain corresponds to 1-3; sequence MAK. The chain crosses the membrane as a helical span at residues 4–24; sequence NLMLWLVIAVVLMSIFQNFSA. At 25–97 the chain is on the extracellular side; sequence NNINNRKIDY…IIGAAPEEQS (73 aa). A helical transmembrane segment spans residues 98–118; sequence FFTAIFISWFPMLLLIGVWVF. Residues 119–610 are Cytoplasmic-facing; the sequence is FMRQMQVGGG…SNICTDDDNN (492 aa). Residue 192–199 coordinates ATP; the sequence is GPPGTGKT. Histidine 414 is a binding site for Zn(2+). Glutamate 415 is a catalytic residue. 2 residues coordinate Zn(2+): histidine 418 and aspartate 492.

In the central section; belongs to the AAA ATPase family. The protein in the C-terminal section; belongs to the peptidase M41 family. As to quaternary structure, homohexamer. Zn(2+) is required as a cofactor.

Its subcellular location is the cell membrane. Acts as a processive, ATP-dependent zinc metallopeptidase for both cytoplasmic and membrane proteins. Plays a role in the quality control of integral membrane proteins. The protein is ATP-dependent zinc metalloprotease FtsH of Buchnera aphidicola subsp. Baizongia pistaciae (strain Bp).